A 275-amino-acid polypeptide reads, in one-letter code: Ribosomal RNA small subunit methyltransferase A (275 aa).

Positions 21, 23, 48, 69, 94, and 115 each coordinate S-adenosyl-L-methionine.

This sequence belongs to the class I-like SAM-binding methyltransferase superfamily. rRNA adenine N(6)-methyltransferase family. RsmA subfamily.

Its subcellular location is the cytoplasm. It catalyses the reaction adenosine(1518)/adenosine(1519) in 16S rRNA + 4 S-adenosyl-L-methionine = N(6)-dimethyladenosine(1518)/N(6)-dimethyladenosine(1519) in 16S rRNA + 4 S-adenosyl-L-homocysteine + 4 H(+). Specifically dimethylates two adjacent adenosines (A1518 and A1519) in the loop of a conserved hairpin near the 3'-end of 16S rRNA in the 30S particle. May play a critical role in biogenesis of 30S subunits. This chain is Ribosomal RNA small subunit methyltransferase A, found in Clostridium botulinum (strain Langeland / NCTC 10281 / Type F).